A 339-amino-acid polypeptide reads, in one-letter code: MIDADPTLRPEPLPEDNDRALRPQGLGEFIGQAEARANLRVFIESARRRGEAMDHTLFHGPPGLGKTTLAQIVARELGVNFRMTSGPVLAKAGDLAAILTNLEARDVLFIDEIHRLNPAVEEVLYPAMEDFELDLVIGEGPAARTVRIELQPFTLVGATTRMGLLTTPLRDRFGIPTRLQFYTIDELFEIVSRNARKLGAPADDAGAREIARRARGTPRIAGRLLRRVVDFAVVEGDGTITRELADGALTRLGVDQLGLDGADRRYLRLVAENYGGGPVGIETMSAALSESRDALEEVIEPYLLQQGLIQRTPRGRMLAQKAWTHLGIAPPKSQSDLFG.

A disordered region spans residues 1–22 (MIDADPTLRPEPLPEDNDRALR). Residues 1 to 182 (MIDADPTLRP…FGIPTRLQFY (182 aa)) are large ATPase domain (RuvB-L). Residues Leu-21, Arg-22, Gly-63, Lys-66, Thr-67, Thr-68, 129–131 (EDF), Arg-172, Tyr-182, and Arg-219 contribute to the ATP site. Thr-67 is a Mg(2+) binding site. A small ATPAse domain (RuvB-S) region spans residues 183–253 (TIDELFEIVS…LADGALTRLG (71 aa)). Residues 256 to 339 (QLGLDGADRR…PPKSQSDLFG (84 aa)) are head domain (RuvB-H). The DNA site is built by Arg-292, Arg-311, and Arg-316.

Belongs to the RuvB family. In terms of assembly, homohexamer. Forms an RuvA(8)-RuvB(12)-Holliday junction (HJ) complex. HJ DNA is sandwiched between 2 RuvA tetramers; dsDNA enters through RuvA and exits via RuvB. An RuvB hexamer assembles on each DNA strand where it exits the tetramer. Each RuvB hexamer is contacted by two RuvA subunits (via domain III) on 2 adjacent RuvB subunits; this complex drives branch migration. In the full resolvosome a probable DNA-RuvA(4)-RuvB(12)-RuvC(2) complex forms which resolves the HJ.

It localises to the cytoplasm. The catalysed reaction is ATP + H2O = ADP + phosphate + H(+). Its function is as follows. The RuvA-RuvB-RuvC complex processes Holliday junction (HJ) DNA during genetic recombination and DNA repair, while the RuvA-RuvB complex plays an important role in the rescue of blocked DNA replication forks via replication fork reversal (RFR). RuvA specifically binds to HJ cruciform DNA, conferring on it an open structure. The RuvB hexamer acts as an ATP-dependent pump, pulling dsDNA into and through the RuvAB complex. RuvB forms 2 homohexamers on either side of HJ DNA bound by 1 or 2 RuvA tetramers; 4 subunits per hexamer contact DNA at a time. Coordinated motions by a converter formed by DNA-disengaged RuvB subunits stimulates ATP hydrolysis and nucleotide exchange. Immobilization of the converter enables RuvB to convert the ATP-contained energy into a lever motion, pulling 2 nucleotides of DNA out of the RuvA tetramer per ATP hydrolyzed, thus driving DNA branch migration. The RuvB motors rotate together with the DNA substrate, which together with the progressing nucleotide cycle form the mechanistic basis for DNA recombination by continuous HJ branch migration. Branch migration allows RuvC to scan DNA until it finds its consensus sequence, where it cleaves and resolves cruciform DNA. The chain is Holliday junction branch migration complex subunit RuvB from Ruegeria sp. (strain TM1040) (Silicibacter sp.).